Consider the following 311-residue polypeptide: Formimidoylglutamase (311 aa).

Mn(2+) is bound by residues H130, D155, H157, D159, C242, and D244.

Belongs to the arginase family. Mn(2+) serves as cofactor.

The enzyme catalyses N-formimidoyl-L-glutamate + H2O = formamide + L-glutamate. The protein operates within amino-acid degradation; L-histidine degradation into L-glutamate; L-glutamate from N-formimidoyl-L-glutamate (hydrolase route): step 1/1. Functionally, catalyzes the conversion of N-formimidoyl-L-glutamate to L-glutamate and formamide. This chain is Formimidoylglutamase, found in Staphylococcus epidermidis (strain ATCC 35984 / DSM 28319 / BCRC 17069 / CCUG 31568 / BM 3577 / RP62A).